The sequence spans 239 residues: Purine nucleoside phosphorylase DeoD-type (239 aa).

His-5 contributes to the a purine D-ribonucleoside binding site. Phosphate-binding positions include Gly-21, Arg-25, Arg-44, and 88 to 91 (RVGS). A purine D-ribonucleoside-binding positions include 180–182 (EME) and 204–205 (SD). The active-site Proton donor is the Asp-205.

The protein belongs to the PNP/UDP phosphorylase family. In terms of assembly, homohexamer; trimer of homodimers.

It carries out the reaction a purine D-ribonucleoside + phosphate = a purine nucleobase + alpha-D-ribose 1-phosphate. It catalyses the reaction a purine 2'-deoxy-D-ribonucleoside + phosphate = a purine nucleobase + 2-deoxy-alpha-D-ribose 1-phosphate. Functionally, catalyzes the reversible phosphorolytic breakdown of the N-glycosidic bond in the beta-(deoxy)ribonucleoside molecules, with the formation of the corresponding free purine bases and pentose-1-phosphate. This chain is Purine nucleoside phosphorylase DeoD-type, found in Yersinia pseudotuberculosis serotype O:1b (strain IP 31758).